A 138-amino-acid polypeptide reads, in one-letter code: ATP synthase epsilon chain (138 aa).

It belongs to the ATPase epsilon chain family. F-type ATPases have 2 components, CF(1) - the catalytic core - and CF(0) - the membrane proton channel. CF(1) has five subunits: alpha(3), beta(3), gamma(1), delta(1), epsilon(1). CF(0) has three main subunits: a, b and c.

Its subcellular location is the cell inner membrane. Produces ATP from ADP in the presence of a proton gradient across the membrane. This Cupriavidus metallidurans (strain ATCC 43123 / DSM 2839 / NBRC 102507 / CH34) (Ralstonia metallidurans) protein is ATP synthase epsilon chain.